Here is a 450-residue protein sequence, read N- to C-terminus: tRNA (guanine-N(7)-)-methyltransferase non-catalytic subunit TRM82 (450 aa).

Over residues Ala69–Glu82 the composition is skewed to basic and acidic residues. Positions Ala69–Gly103 are disordered. 3 WD repeats span residues Pro108–Cys147, Gly200–Lys241, and Gly245–Ser285.

It belongs to the WD repeat TRM82 family. Forms a heterodimer with the catalytic subunit TRM8.

The protein resides in the nucleus. Its pathway is tRNA modification; N(7)-methylguanine-tRNA biosynthesis. Required for the formation of N(7)-methylguanine at position 46 (m7G46) in tRNA. In the complex, it is required to stabilize and induce conformational changes of the catalytic subunit. The chain is tRNA (guanine-N(7)-)-methyltransferase non-catalytic subunit TRM82 from Eremothecium gossypii (strain ATCC 10895 / CBS 109.51 / FGSC 9923 / NRRL Y-1056) (Yeast).